The sequence spans 305 residues: Protein FdhE homolog (305 aa).

It belongs to the FdhE family.

It is found in the cytoplasm. Its function is as follows. Necessary for formate dehydrogenase activity. The sequence is that of Protein FdhE homolog from Actinobacillus pleuropneumoniae serotype 7 (strain AP76).